We begin with the raw amino-acid sequence, 206 residues long: Thiamine-phosphate synthase (206 aa).

4-amino-2-methyl-5-(diphosphooxymethyl)pyrimidine is bound by residues 35-39 and asparagine 67; that span reads QLRHK. Residues aspartate 68 and aspartate 87 each contribute to the Mg(2+) site. Serine 106 is a 4-amino-2-methyl-5-(diphosphooxymethyl)pyrimidine binding site. 132–134 contacts 2-[(2R,5Z)-2-carboxy-4-methylthiazol-5(2H)-ylidene]ethyl phosphate; sequence TGS. Lysine 135 is a 4-amino-2-methyl-5-(diphosphooxymethyl)pyrimidine binding site. Residue glycine 163 participates in 2-[(2R,5Z)-2-carboxy-4-methylthiazol-5(2H)-ylidene]ethyl phosphate binding.

This sequence belongs to the thiamine-phosphate synthase family. The cofactor is Mg(2+).

It catalyses the reaction 2-[(2R,5Z)-2-carboxy-4-methylthiazol-5(2H)-ylidene]ethyl phosphate + 4-amino-2-methyl-5-(diphosphooxymethyl)pyrimidine + 2 H(+) = thiamine phosphate + CO2 + diphosphate. It carries out the reaction 2-(2-carboxy-4-methylthiazol-5-yl)ethyl phosphate + 4-amino-2-methyl-5-(diphosphooxymethyl)pyrimidine + 2 H(+) = thiamine phosphate + CO2 + diphosphate. The catalysed reaction is 4-methyl-5-(2-phosphooxyethyl)-thiazole + 4-amino-2-methyl-5-(diphosphooxymethyl)pyrimidine + H(+) = thiamine phosphate + diphosphate. It functions in the pathway cofactor biosynthesis; thiamine diphosphate biosynthesis; thiamine phosphate from 4-amino-2-methyl-5-diphosphomethylpyrimidine and 4-methyl-5-(2-phosphoethyl)-thiazole: step 1/1. Its function is as follows. Condenses 4-methyl-5-(beta-hydroxyethyl)thiazole monophosphate (THZ-P) and 2-methyl-4-amino-5-hydroxymethyl pyrimidine pyrophosphate (HMP-PP) to form thiamine monophosphate (TMP). In Chlorobium phaeobacteroides (strain DSM 266 / SMG 266 / 2430), this protein is Thiamine-phosphate synthase.